A 228-amino-acid chain; its full sequence is 7-cyano-7-deazaguanine synthase (228 aa).

7–17 (LSGGLDSAVNL) serves as a coordination point for ATP. Zn(2+)-binding residues include cysteine 192, cysteine 200, cysteine 203, and cysteine 206.

This sequence belongs to the QueC family. As to quaternary structure, homodimer. It depends on Zn(2+) as a cofactor.

It carries out the reaction 7-carboxy-7-deazaguanine + NH4(+) + ATP = 7-cyano-7-deazaguanine + ADP + phosphate + H2O + H(+). It participates in purine metabolism; 7-cyano-7-deazaguanine biosynthesis. In terms of biological role, catalyzes the ATP-dependent conversion of 7-carboxy-7-deazaguanine (CDG) to 7-cyano-7-deazaguanine (preQ(0)). In Desulforamulus reducens (strain ATCC BAA-1160 / DSM 100696 / MI-1) (Desulfotomaculum reducens), this protein is 7-cyano-7-deazaguanine synthase.